Here is a 361-residue protein sequence, read N- to C-terminus: Ribosomal RNA large subunit methyltransferase M (361 aa).

S-adenosyl-L-methionine-binding positions include S193, 226 to 229 (CPGG), D245, D265, and D283. Catalysis depends on K312, which acts as the Proton acceptor.

Belongs to the class I-like SAM-binding methyltransferase superfamily. RNA methyltransferase RlmE family. RlmM subfamily. Monomer.

The protein localises to the cytoplasm. The catalysed reaction is cytidine(2498) in 23S rRNA + S-adenosyl-L-methionine = 2'-O-methylcytidine(2498) in 23S rRNA + S-adenosyl-L-homocysteine + H(+). Catalyzes the 2'-O-methylation at nucleotide C2498 in 23S rRNA. This is Ribosomal RNA large subunit methyltransferase M from Histophilus somni (strain 2336) (Haemophilus somnus).